Reading from the N-terminus, the 580-residue chain is Negative elongation factor B (580 aa).

The residue at position 519 (Lys519) is an N6-acetyllysine. Positions 548–580 (LEQLDHRKPSPAQAAETPALELPLPSVPAPAPL) are disordered. Position 557 is a phosphoserine (Ser557).

This sequence belongs to the NELF-B family. The NELF complex is composed of NELFA, NELFB, NELFCD (isoform NELF-C or isoform NELF-D) and NELFE; the N-terminus of NELFB binds to the NELFA:NELFCD subcomplex. Binds RNA which may help to stabilize the NELF complex on nucleic acid. Interacts with the first BRCT repeat of BRCA1. Interacts with KIAA1191. Interacts with NELFE. As to expression, widely expressed. Expressed in heart, brain, lung, placenta, liver, skeletal muscle, kidney and pancreas.

Its subcellular location is the nucleus. In terms of biological role, essential component of the NELF complex, a complex that negatively regulates the elongation of transcription by RNA polymerase II. The NELF complex, which acts via an association with the DSIF complex and causes transcriptional pausing, is counteracted by the P-TEFb kinase complex. May be able to induce chromatin unfolding. Essential for early embryogenesis; plays an important role in maintaining the undifferentiated state of embryonic stem cells (ESCs) by preventing unscheduled expression of developmental genes. Plays a key role in establishing the responsiveness of stem cells to developmental cues; facilitates plasticity and cell fate commitment in ESCs by establishing the appropriate expression level of signaling molecules. Supports the transcription of genes involved in energy metabolism in cardiomyocytes; facilitates the association of transcription initiation factors with the promoters of the metabolism-related genes. Functionally, (Microbial infection) The NELF complex is involved in HIV-1 latency possibly involving recruitment of PCF11 to paused RNA polymerase II. In vitro, binds weakly to the HIV-1 TAR RNA which is located in the long terminal repeat (LTR) of HIV-1. The protein is Negative elongation factor B (NELFB) of Homo sapiens (Human).